We begin with the raw amino-acid sequence, 122 residues long: Nuclear transcription factor Y subunit beta (122 aa).

The subunit association domain (SAD) stretch occupies residues 1 to 12 (VQECVSEFISFI). The segment at 1 to 57 (VQECVSEFISFITSEASERCHQEKRKTINGEDILFAMSTLGFDSYVEPLKLYLQKFR) is b domain. Residues 58-122 (EAMKGEKGIG…ISGVQQIQFS (65 aa)) form a c domain region.

It belongs to the NFYB/HAP3 subunit family. Heterotrimeric transcription factor composed of three components, NF-YA, NF-YB and NF-YC. NF-YB and NF-YC must interact and dimerize for NF-YA association and DNA binding.

It is found in the nucleus. In terms of biological role, component of the sequence-specific heterotrimeric transcription factor (NF-Y) which specifically recognizes a 5'-CCAAT-3' box motif found in the promoters of its target genes. NF-Y can function as both an activator and a repressor, depending on its interacting cofactors. This Xenopus laevis (African clawed frog) protein is Nuclear transcription factor Y subunit beta (nfyb).